Consider the following 620-residue polypeptide: UDP-glucose:protein N-beta-glucosyltransferase (620 aa).

It belongs to the glycosyltransferase 41 family.

It localises to the cytoplasm. It carries out the reaction L-asparaginyl-[protein] + UDP-alpha-D-glucose = N(4)-(beta-D-glucosyl)-L-asparaginyl-[protein] + UDP + H(+). It functions in the pathway protein modification; protein glycosylation. Functionally, inverting glycosyltransferase that catalyzes the transfer of one glucose moiety from UDP-glucose to an asparagine residue in peptides and proteins containing the NX(S/T) motif, resulting in their modification with a beta-linked 1,N-glucose. Likely acts as a key component of a general protein glycosylation system. This is UDP-glucose:protein N-beta-glucosyltransferase from Actinobacillus pleuropneumoniae serotype 5b (strain L20).